The sequence spans 222 residues: N-(5'-phosphoribosyl)anthranilate isomerase (222 aa).

Belongs to the TrpF family.

The catalysed reaction is N-(5-phospho-beta-D-ribosyl)anthranilate = 1-(2-carboxyphenylamino)-1-deoxy-D-ribulose 5-phosphate. It participates in amino-acid biosynthesis; L-tryptophan biosynthesis; L-tryptophan from chorismate: step 3/5. In Beijerinckia indica subsp. indica (strain ATCC 9039 / DSM 1715 / NCIMB 8712), this protein is N-(5'-phosphoribosyl)anthranilate isomerase.